An 812-amino-acid chain; its full sequence is E3 UFM1-protein ligase 1 homolog (812 aa).

The segment at 389–495 (IKHSAGQGKP…KTKEDNTNIF (107 aa)) is disordered. Basic and acidic residues-rich tracts occupy residues 403-415 (SEHRIGSDGKDLG) and 475-491 (DAKHGGKKASEKTKEDN).

Belongs to the UFL1 family.

Functionally, E3 UFM1-protein ligase that mediates ufmylation of target proteins. The chain is E3 UFM1-protein ligase 1 homolog from Oryza sativa subsp. indica (Rice).